The following is a 1031-amino-acid chain: Translation initiation factor IF-2 (1031 aa).

Disordered stretches follow at residues K33 to L369 and L388 to L436. Basic and acidic residues predominate over residues E45–V56. Residues P96–A105 are compositionally biased toward low complexity. The span at A108–S123 shows a compositional bias: polar residues. Residues P148–P171 show a composition bias toward low complexity. Residues V184–R200 show a composition bias toward pro residues. The span at T250–E281 shows a compositional bias: basic and acidic residues. Positions P286–D299 are enriched in pro residues. Over residues R419–S435 the composition is skewed to low complexity. The region spanning P522–Q695 is the tr-type G domain. A G1 region spans residues G531–T538. Residue G531–T538 coordinates GTP. Residues G556–R560 are G2. The interval D581–G584 is G3. GTP is bound by residues D581–H585 and N635–D638. The tract at residues N635–D638 is G4. The G5 stretch occupies residues S671 to L673.

The protein belongs to the TRAFAC class translation factor GTPase superfamily. Classic translation factor GTPase family. IF-2 subfamily.

The protein localises to the cytoplasm. In terms of biological role, one of the essential components for the initiation of protein synthesis. Protects formylmethionyl-tRNA from spontaneous hydrolysis and promotes its binding to the 30S ribosomal subunits. Also involved in the hydrolysis of GTP during the formation of the 70S ribosomal complex. In Synechococcus sp. (strain JA-3-3Ab) (Cyanobacteria bacterium Yellowstone A-Prime), this protein is Translation initiation factor IF-2.